Reading from the N-terminus, the 157-residue chain is UPF0251 protein CLK_0815 (157 aa).

This sequence belongs to the UPF0251 family.

In Clostridium botulinum (strain Loch Maree / Type A3), this protein is UPF0251 protein CLK_0815.